The primary structure comprises 476 residues: Serine/threonine-protein kinase PknF (476 aa).

Phosphothreonine; by autocatalysis occurs at positions 8 and 13. A Protein kinase domain is found at 12–279; the sequence is FTIVRQLGSG…FARALGHRLG (268 aa). Residues 18–26 and Lys41 contribute to the ATP site; that span reads LGSGGMGEV. The active-site Proton acceptor is the Asp137. 3 positions are modified to phosphothreonine; by autocatalysis: Thr173, Thr175, and Thr287. Position 290 is a phosphoserine; by autocatalysis (Ser290). Residues 332–376 form a disordered region; it reads ADDERAAQPARTRTTTSAGTTTSVAPASTTRPAPTTPTTTGAADT. Low complexity predominate over residues 338-376; sequence AQPARTRTTTSAGTTTSVAPASTTRPAPTTPTTTGAADT.

It belongs to the protein kinase superfamily. Ser/Thr protein kinase family. Dephosphorylated by PstP.

It carries out the reaction L-seryl-[protein] + ATP = O-phospho-L-seryl-[protein] + ADP + H(+). It catalyses the reaction L-threonyl-[protein] + ATP = O-phospho-L-threonyl-[protein] + ADP + H(+). The polypeptide is Serine/threonine-protein kinase PknF (pknF) (Mycobacterium bovis (strain ATCC BAA-935 / AF2122/97)).